A 121-amino-acid polypeptide reads, in one-letter code: Small ribosomal subunit protein uS13 (121 aa).

The tract at residues His-91–Lys-121 is disordered. Positions Gln-100–Lys-121 are enriched in basic residues.

It belongs to the universal ribosomal protein uS13 family. Part of the 30S ribosomal subunit. Forms a loose heterodimer with protein S19. Forms two bridges to the 50S subunit in the 70S ribosome.

Its function is as follows. Located at the top of the head of the 30S subunit, it contacts several helices of the 16S rRNA. In the 70S ribosome it contacts the 23S rRNA (bridge B1a) and protein L5 of the 50S subunit (bridge B1b), connecting the 2 subunits; these bridges are implicated in subunit movement. Contacts the tRNAs in the A and P-sites. This is Small ribosomal subunit protein uS13 from Prochlorococcus marinus (strain MIT 9301).